Consider the following 434-residue polypeptide: Histidinol dehydrogenase (434 aa).

The NAD(+) site is built by Tyr-130, Gln-188, and Asn-211. Residues Ser-237, Gln-259, and His-262 each coordinate substrate. Residues Gln-259 and His-262 each contribute to the Zn(2+) site. Residues Glu-326 and His-327 each act as proton acceptor in the active site. Substrate-binding residues include His-327, Asp-360, Glu-414, and His-419. Asp-360 contacts Zn(2+). Residue His-419 coordinates Zn(2+).

It belongs to the histidinol dehydrogenase family. Homodimer. Zn(2+) serves as cofactor. Requires Mn(2+) as cofactor.

It catalyses the reaction L-histidinol + 2 NAD(+) + H2O = L-histidine + 2 NADH + 3 H(+). The protein operates within amino-acid biosynthesis; L-histidine biosynthesis; L-histidine from 5-phospho-alpha-D-ribose 1-diphosphate: step 9/9. Its activity is regulated as follows. Activity is lost when the metal is removed through urea denaturation or chelation, and can be regained by addition of metal. Functionally, catalyzes the sequential NAD-dependent oxidations of L-histidinol to L-histidinaldehyde and then to L-histidine. The chain is Histidinol dehydrogenase (hisD) from Salmonella typhimurium (strain LT2 / SGSC1412 / ATCC 700720).